A 151-amino-acid polypeptide reads, in one-letter code: Probable cGMP 3',5'-cyclic phosphodiesterase subunit delta (151 aa).

It belongs to the PDE6D/unc-119 family. In terms of assembly, interacts with Pde6.

The protein resides in the nucleus. It localises to the cytoplasm. In Drosophila erecta (Fruit fly), this protein is Probable cGMP 3',5'-cyclic phosphodiesterase subunit delta.